The primary structure comprises 80 residues: Acyl carrier protein (80 aa).

Residues 4 to 79 form the Carrier domain; sequence EEIFNKIKDL…DAVSYIKSHQ (76 aa). Ser-39 is subject to O-(pantetheine 4'-phosphoryl)serine.

It belongs to the acyl carrier protein (ACP) family. 4'-phosphopantetheine is transferred from CoA to a specific serine of apo-ACP by AcpS. This modification is essential for activity because fatty acids are bound in thioester linkage to the sulfhydryl of the prosthetic group.

The protein localises to the cytoplasm. It participates in lipid metabolism; fatty acid biosynthesis. Functionally, carrier of the growing fatty acid chain in fatty acid biosynthesis. The sequence is that of Acyl carrier protein from Lactobacillus acidophilus (strain ATCC 700396 / NCK56 / N2 / NCFM).